The chain runs to 213 residues: Flagellar transcriptional regulator FlhC (213 aa).

Zn(2+) contacts are provided by C138, C141, C158, and C161.

The protein belongs to the FlhC family. In terms of assembly, heterohexamer composed of two FlhC and four FlhD subunits. Each FlhC binds a FlhD dimer, forming a heterotrimer, and a hexamer assembles by dimerization of two heterotrimers. Zn(2+) serves as cofactor.

The protein resides in the cytoplasm. Functionally, functions in complex with FlhD as a master transcriptional regulator that regulates transcription of several flagellar and non-flagellar operons by binding to their promoter region. Activates expression of class 2 flagellar genes, including fliA, which is a flagellum-specific sigma factor that turns on the class 3 genes. Also regulates genes whose products function in a variety of physiological pathways. The chain is Flagellar transcriptional regulator FlhC from Cupriavidus metallidurans (strain ATCC 43123 / DSM 2839 / NBRC 102507 / CH34) (Ralstonia metallidurans).